We begin with the raw amino-acid sequence, 260 residues long: MLQPVWSCILALLGVFIFHVGEVRSQCWESNKCTDLSSEDGILECIKACKMDLSAESPVFPGNGHMQPLSENIRKYVMSHFRWNKFGRRNSTSNDNNNGGYKREDIANYPILNLLTGSDNQNTQQGIMEDEAVDRQDSKRSYSMEHFRWGKPVGKKRRPIKVFPTDAEEESSEIFPLELRRELSLEFDYPDTNSEEDLDDGELLDGPVKKDRKYKMHHFRWEGPPKDKRYGGFMTPERSQTPLMTLFKNAIIKNAHKKGQ.

The N-terminal stretch at 1 to 25 is a signal peptide; it reads MLQPVWSCILALLGVFIFHVGEVRS. Position 26 is a pyrrolidone carboxylic acid (Gln26). Phe86 carries the post-translational modification Phenylalanine amide. N-linked (GlcNAc...) asparagine glycosylation is present at Asn90. Positions 104–138 are excised as a propeptide; sequence EDIANYPILNLLTGSDNQNTQQGIMEDEAVDRQDS. Val153 carries the valine amide modification.

Belongs to the POMC family. Post-translationally, specific enzymatic cleavages at paired basic residues yield the different active peptides.

The protein localises to the secreted. Its function is as follows. Stimulates the adrenal glands to release cortisol. Functionally, anorexigenic peptide. Increases the pigmentation of skin by increasing melanin production in melanocytes. Increases the pigmentation of skin by increasing melanin production in melanocytes. In terms of biological role, endogenous orexigenic opiate. Its function is as follows. Endogenous opiate. The polypeptide is Pro-opiomelanocortin (pomc) (Pelophylax ridibundus (Marsh frog)).